The primary structure comprises 283 residues: Polyamine aminopropyltransferase (283 aa).

The PABS domain occupies 5 to 241; the sequence is NNWYIEHFER…GWWSVTMARK (237 aa). Gln35 is a binding site for S-methyl-5'-thioadenosine. Positions 66 and 90 each coordinate spermidine. S-methyl-5'-thioadenosine contacts are provided by residues Asp110 and 141 to 142; that span reads DG. Catalysis depends on Asp160, which acts as the Proton acceptor. Position 160–163 (160–163) interacts with spermidine; that stretch reads DSTD. Pro167 serves as a coordination point for S-methyl-5'-thioadenosine.

This sequence belongs to the spermidine/spermine synthase family. As to quaternary structure, homodimer or homotetramer.

The protein localises to the cytoplasm. It carries out the reaction S-adenosyl 3-(methylsulfanyl)propylamine + putrescine = S-methyl-5'-thioadenosine + spermidine + H(+). It participates in amine and polyamine biosynthesis; spermidine biosynthesis; spermidine from putrescine: step 1/1. Its function is as follows. Catalyzes the irreversible transfer of a propylamine group from the amino donor S-adenosylmethioninamine (decarboxy-AdoMet) to putrescine (1,4-diaminobutane) to yield spermidine. This is Polyamine aminopropyltransferase from Stenotrophomonas maltophilia (strain K279a).